We begin with the raw amino-acid sequence, 191 residues long: MKKSLLGLTFASLMFSAGSAVAADYKIDKEGQHAFVNFRIQHLGYSWLYGTFKDFDGTFTFDEKNPAADKVNVTINTTSVDTNHTERDKHLRSADFLNTAKYPQATFTSTSVKKDGDELDITGDLTLNGVTKPVTLEAKLIGQGDDPWGGKRAGFEAEGKIKLKDFNIKTDLGPASQEVDLIISVEGVQQK.

Residues 1–22 (MKKSLLGLTFASLMFSAGSAVA) form the signal peptide.

It belongs to the UPF0312 family. Type 1 subfamily.

Its subcellular location is the periplasm. In Escherichia coli O6:H1 (strain CFT073 / ATCC 700928 / UPEC), this protein is Protein YceI.